The sequence spans 173 residues: Nuclear transcription factor Y subunit B-8 (173 aa).

A disordered region spans residues 1-30; the sequence is MAESQAKSPGGCGSHESGGDQSPRSLHVRE. Position 2 is an N-acetylalanine (alanine 2). A DNA-binding region spans residues 35–41; that stretch reads LPIANIS. The subunit association domain (SAD) stretch occupies residues 62–73; sequence VQECVSEFISFV. Positions 123 to 173 are disordered; the sequence is DTKGSAKGGDPNAKKDGQSSQNGQFSQLAHQGPYGNSQAQQHMMVPMPGTD. Positions 140 to 163 are enriched in polar residues; that stretch reads QSSQNGQFSQLAHQGPYGNSQAQQ.

It belongs to the NFYB/HAP3 subunit family. As to quaternary structure, heterotrimeric transcription factor composed of three components, NF-YA, NF-YB and NF-YC. NF-YB and NF-YC must interact and dimerize for NF-YA association and DNA binding. As to expression, expressed in flowers and mature rosettes.

It is found in the nucleus. Functionally, component of the NF-Y/HAP transcription factor complex. The NF-Y complex stimulates the transcription of various genes by recognizing and binding to a CCAAT motif in promoters. In Arabidopsis thaliana (Mouse-ear cress), this protein is Nuclear transcription factor Y subunit B-8 (NFYB8).